The chain runs to 512 residues: Putative ribose/galactose/methyl galactoside import ATP-binding protein 2 (512 aa).

ABC transporter domains are found at residues isoleucine 14–glutamine 251 and threonine 262–glutamate 507. Glycine 46 to serine 53 serves as a coordination point for ATP.

It belongs to the ABC transporter superfamily. Carbohydrate importer 2 (CUT2) (TC 3.A.1.2) family.

The protein localises to the cell inner membrane. It carries out the reaction D-ribose(out) + ATP + H2O = D-ribose(in) + ADP + phosphate + H(+). It catalyses the reaction D-galactose(out) + ATP + H2O = D-galactose(in) + ADP + phosphate + H(+). In terms of biological role, part of an ABC transporter complex involved in carbohydrate import. Could be involved in ribose, galactose and/or methyl galactoside import. Responsible for energy coupling to the transport system. This chain is Putative ribose/galactose/methyl galactoside import ATP-binding protein 2, found in Burkholderia cenocepacia (strain HI2424).